Here is a 344-residue protein sequence, read N- to C-terminus: N-acetyl-gamma-glutamyl-phosphate reductase (344 aa).

Residue Cys148 is part of the active site.

The protein belongs to the NAGSA dehydrogenase family. Type 1 subfamily.

Its subcellular location is the cytoplasm. It carries out the reaction N-acetyl-L-glutamate 5-semialdehyde + phosphate + NADP(+) = N-acetyl-L-glutamyl 5-phosphate + NADPH + H(+). Its pathway is amino-acid biosynthesis; L-arginine biosynthesis; N(2)-acetyl-L-ornithine from L-glutamate: step 3/4. Catalyzes the NADPH-dependent reduction of N-acetyl-5-glutamyl phosphate to yield N-acetyl-L-glutamate 5-semialdehyde. The sequence is that of N-acetyl-gamma-glutamyl-phosphate reductase from Clostridium beijerinckii (strain ATCC 51743 / NCIMB 8052) (Clostridium acetobutylicum).